The sequence spans 38 residues: Beta-defensin 1 (38 aa).

3 disulfides stabilise this stretch: Cys5–Cys34, Cys12–Cys27, and Cys17–Cys35.

This sequence belongs to the beta-defensin family. Monomer. Homodimer. As to expression, neutrophilic granules.

Its subcellular location is the secreted. The protein resides in the membrane. Has bactericidal activity. Active against E.coli ML35 but not against S.aureus 502A. May act as a ligand for C-C chemokine receptor CCR6. Positively regulates the sperm motility and bactericidal activity in a CCR6-dependent manner. Binds to CCR6 and triggers Ca2+ mobilization in the sperm which is important for its motility. This Bos taurus (Bovine) protein is Beta-defensin 1 (DEFB1).